A 69-amino-acid polypeptide reads, in one-letter code: DNA-directed RNA polymerase subunit omega (69 aa).

Belongs to the RNA polymerase subunit omega family. In terms of assembly, the RNAP catalytic core consists of 2 alpha, 1 beta, 1 beta' and 1 omega subunit. When a sigma factor is associated with the core the holoenzyme is formed, which can initiate transcription.

It carries out the reaction RNA(n) + a ribonucleoside 5'-triphosphate = RNA(n+1) + diphosphate. Its function is as follows. Promotes RNA polymerase assembly. Latches the N- and C-terminal regions of the beta' subunit thereby facilitating its interaction with the beta and alpha subunits. The polypeptide is DNA-directed RNA polymerase subunit omega (Hahella chejuensis (strain KCTC 2396)).